We begin with the raw amino-acid sequence, 91 residues long: MGLEDERKMLTESGDPEKEEEEEEELVDPLTTVREQCEQLEKCVKARERLELCDKRVSSRSRTEEDCTEELLDFLHARDHCVAYKLFNNLK.

Positions 1-10 (MGLEDERKML) are enriched in basic and acidic residues. The transit peptide at 1 to 13 (MGLEDERKMLTES) directs the protein to the mitochondrion. Positions 1–30 (MGLEDERKMLTESGDPEKEEEEEEELVDPL) are disordered. Residues 17-27 (EKEEEEEEELV) show a composition bias toward acidic residues. 2 cysteine pairs are disulfide-bonded: C37–C81 and C53–C67. K42 carries the post-translational modification N6-acetyllysine. K85 is subject to N6-acetyllysine.

It belongs to the UQCRH/QCR6 family. As to quaternary structure, component of the ubiquinol-cytochrome c oxidoreductase (cytochrome b-c1 complex, complex III, CIII), a multisubunit enzyme composed of 11 subunits. The complex is composed of 3 respiratory subunits cytochrome b, cytochrome c1 and Rieske protein UQCRFS1, 2 core protein subunits UQCRC1/QCR1 and UQCRC2/QCR2, and 6 low-molecular weight protein subunits UQCRH/QCR6, UQCRB/QCR7, UQCRQ/QCR8, UQCR10/QCR9, UQCR11/QCR10 and subunit 9, the cleavage product of Rieske protein UQCRFS1. The complex exists as an obligatory dimer and forms supercomplexes (SCs) in the inner mitochondrial membrane with NADH-ubiquinone oxidoreductase (complex I, CI) and cytochrome c oxidase (complex IV, CIV), resulting in different assemblies (supercomplex SCI(1)III(2)IV(1) and megacomplex MCI(2)III(2)IV(2)).

Its subcellular location is the mitochondrion inner membrane. Functionally, component of the ubiquinol-cytochrome c oxidoreductase, a multisubunit transmembrane complex that is part of the mitochondrial electron transport chain which drives oxidative phosphorylation. The respiratory chain contains 3 multisubunit complexes succinate dehydrogenase (complex II, CII), ubiquinol-cytochrome c oxidoreductase (cytochrome b-c1 complex, complex III, CIII) and cytochrome c oxidase (complex IV, CIV), that cooperate to transfer electrons derived from NADH and succinate to molecular oxygen, creating an electrochemical gradient over the inner membrane that drives transmembrane transport and the ATP synthase. The cytochrome b-c1 complex catalyzes electron transfer from ubiquinol to cytochrome c, linking this redox reaction to translocation of protons across the mitochondrial inner membrane, with protons being carried across the membrane as hydrogens on the quinol. In the process called Q cycle, 2 protons are consumed from the matrix, 4 protons are released into the intermembrane space and 2 electrons are passed to cytochrome c. This is Cytochrome b-c1 complex subunit 6, mitochondrial (UQCRH) from Macaca fascicularis (Crab-eating macaque).